A 282-amino-acid chain; its full sequence is Formamidopyrimidine-DNA glycosylase (282 aa).

Pro2 serves as the catalytic Schiff-base intermediate with DNA. Glu3 (proton donor) is an active-site residue. The active-site Proton donor; for beta-elimination activity is the Lys61. DNA contacts are provided by His93, Arg112, and Lys158. The FPG-type zinc finger occupies 244 to 278; that stretch reads DAYGREGEGCRRCGAVMHREKFMNRSSFYCPRCQP. The Proton donor; for delta-elimination activity role is filled by Arg268.

Belongs to the FPG family. Monomer. Zn(2+) is required as a cofactor.

The enzyme catalyses Hydrolysis of DNA containing ring-opened 7-methylguanine residues, releasing 2,6-diamino-4-hydroxy-5-(N-methyl)formamidopyrimidine.. The catalysed reaction is 2'-deoxyribonucleotide-(2'-deoxyribose 5'-phosphate)-2'-deoxyribonucleotide-DNA = a 3'-end 2'-deoxyribonucleotide-(2,3-dehydro-2,3-deoxyribose 5'-phosphate)-DNA + a 5'-end 5'-phospho-2'-deoxyribonucleoside-DNA + H(+). Involved in base excision repair of DNA damaged by oxidation or by mutagenic agents. Acts as a DNA glycosylase that recognizes and removes damaged bases. Has a preference for oxidized purines, such as 7,8-dihydro-8-oxoguanine (8-oxoG). Has AP (apurinic/apyrimidinic) lyase activity and introduces nicks in the DNA strand. Cleaves the DNA backbone by beta-delta elimination to generate a single-strand break at the site of the removed base with both 3'- and 5'-phosphates. This is Formamidopyrimidine-DNA glycosylase from Mycobacterium leprae (strain Br4923).